We begin with the raw amino-acid sequence, 223 residues long: Ras-related protein Rab-21 (223 aa).

A2 is subject to N-acetylalanine. GTP is bound by residues G26, G29, K30, T31, S32, N43, D44, H46, T48, and T49. Position 31 (T31) interacts with Mg(2+). A Switch 1 motif is present at residues 41–54 (KFNDKHITTLQASF). The Mg(2+) site is built by T49 and D72. Residues 74–92 (AGQERFHALGPIYYRDSNG) carry the Switch 2 motif. Residues G75, N130, K131, D133, A161, and K162 each contribute to the GTP site. 2 S-geranylgeranyl cysteine lipidation sites follow: C219 and C220. C220 carries the cysteine methyl ester modification. Residues 221–223 (SSG) constitute a propeptide, removed in mature form.

This sequence belongs to the small GTPase superfamily. Rab family. As to quaternary structure, interacts with the cytoplasmic tail of integrins ITGA1, ITGA2, ITGA5, ITGA6, ITGA11 and ITGB1; this interaction is dependent upon its GDP/GTP cycle. Interacts with ANKRD27. Interacts (active GTP-bound form) with TMED10; the interaction is indirect and regulates TMED10 abundance and localization at the Golgi. Mg(2+) is required as a cofactor.

The protein localises to the endoplasmic reticulum membrane. It localises to the golgi apparatus. The protein resides in the trans-Golgi network. Its subcellular location is the golgi apparatus membrane. It is found in the early endosome membrane. The protein localises to the cytoplasmic vesicle membrane. It localises to the cleavage furrow. The protein resides in the cell projection. Its subcellular location is the neuron projection. It catalyses the reaction GTP + H2O = GDP + phosphate + H(+). Regulated by guanine nucleotide exchange factors (GEFs) including ANKRD27 and RABGEF1, which promote the exchange of bound GDP for free GTP. Regulated by GTPase activating proteins (GAPs) which increase the GTP hydrolysis activity. Inhibited by GDP dissociation inhibitors (GDIs). The small GTPases Rab are key regulators of intracellular membrane trafficking, from the formation of transport vesicles to their fusion with membranes. Rabs cycle between an inactive GDP-bound form and an active GTP-bound form that is able to recruit to membranes different sets of downstream effectors directly responsible for vesicle formation, movement, tethering and fusion. RAB21 is involved in membrane trafficking control. Regulates integrin internalization and recycling, but does not influence the traffic of endosomally translocated receptors in general. As a result, may regulate cell adhesion and migration. During the mitosis of adherent cells, controls the endosomal trafficking of integrins which is required for the successful completion of cytokinesis. Involved in neurite growth. Modulates protein levels of the cargo receptors TMED2 and TMED10, and required for appropriate Golgi localization of TMED10. This Canis lupus familiaris (Dog) protein is Ras-related protein Rab-21 (RAB21).